Here is a 587-residue protein sequence, read N- to C-terminus: D-lactate dehydrogenase [cytochrome] 1, mitochondrial (587 aa).

One can recognise an FAD-binding PCMH-type domain in the interval 146–327; it reads SPEQRPRIIL…TEATVKCHVK (182 aa).

It belongs to the FAD-binding oxidoreductase/transferase type 4 family. FAD serves as cofactor.

The protein localises to the mitochondrion inner membrane. The catalysed reaction is (R)-lactate + 2 Fe(III)-[cytochrome c] = 2 Fe(II)-[cytochrome c] + pyruvate + 2 H(+). Functionally, catalyzes the stereospecific oxidation of D-lactate to pyruvate. The chain is D-lactate dehydrogenase [cytochrome] 1, mitochondrial from Saccharomyces cerevisiae (strain ATCC 204508 / S288c) (Baker's yeast).